Here is a 157-residue protein sequence, read N- to C-terminus: Transcription elongation factor GreB (157 aa).

This sequence belongs to the GreA/GreB family. GreB subfamily.

Its function is as follows. Necessary for efficient RNA polymerase transcription elongation past template-encoded arresting sites. The arresting sites in DNA have the property of trapping a certain fraction of elongating RNA polymerases that pass through, resulting in locked ternary complexes. Cleavage of the nascent transcript by cleavage factors such as GreA or GreB allows the resumption of elongation from the new 3'terminus. GreB releases sequences of up to 9 nucleotides in length. The polypeptide is Transcription elongation factor GreB (Salmonella typhi).